Here is a 247-residue protein sequence, read N- to C-terminus: MKKNHEKHADKKEAAKEELEKDLQPKDESAVKDEQGAGCGCETSKENPQEDKAEQNSSTGGKCEKNDDVLSPEKRIEELEAKCRDWQDQYLRKAADFENYRKRMIREKQEAIDYANSNLLLDLVQVLDDFDRAIDAGKTQGGESVNNAFVEGVVMIKNQMVSMLSSKYGLSYYPAKGEAFDPNLHEAVSMIQSPDVKEAVVGEELQKGYKLKERVIRHSKVMVLMPAEKQDEKKAEESEAADKKNEN.

2 disordered regions span residues 1–68 and 226–247; these read MKKN…KNDD and PAEK…KNEN. Composition is skewed to basic and acidic residues over residues 7–35, 43–54, and 228–247; these read KHAD…KDEQ, TSKENPQEDKAE, and EKQD…KNEN.

The protein belongs to the GrpE family. As to quaternary structure, homodimer.

The protein localises to the cytoplasm. Functionally, participates actively in the response to hyperosmotic and heat shock by preventing the aggregation of stress-denatured proteins, in association with DnaK and GrpE. It is the nucleotide exchange factor for DnaK and may function as a thermosensor. Unfolded proteins bind initially to DnaJ; upon interaction with the DnaJ-bound protein, DnaK hydrolyzes its bound ATP, resulting in the formation of a stable complex. GrpE releases ADP from DnaK; ATP binding to DnaK triggers the release of the substrate protein, thus completing the reaction cycle. Several rounds of ATP-dependent interactions between DnaJ, DnaK and GrpE are required for fully efficient folding. This is Protein GrpE from Treponema denticola (strain ATCC 35405 / DSM 14222 / CIP 103919 / JCM 8153 / KCTC 15104).